Here is a 106-residue protein sequence, read N- to C-terminus: A-type ATP synthase subunit F (106 aa).

The protein belongs to the V-ATPase F subunit family. As to quaternary structure, has multiple subunits with at least A(3), B(3), C, D, E, F, H, I and proteolipid K(x).

Its subcellular location is the cell membrane. Functionally, component of the A-type ATP synthase that produces ATP from ADP in the presence of a proton gradient across the membrane. The protein is A-type ATP synthase subunit F of Haloferax volcanii (strain ATCC 29605 / DSM 3757 / JCM 8879 / NBRC 14742 / NCIMB 2012 / VKM B-1768 / DS2) (Halobacterium volcanii).